The sequence spans 468 residues: Aldehyde dehydrogenase family 3 member B1 (468 aa).

At Met1 the chain carries N-acetylmethionine. 188–193 (GNTYVG) lines the NAD(+) pocket. Catalysis depends on residues Glu210 and Cys244. S-palmitoyl cysteine attachment occurs at residues Cys462 and Cys463. Cys465 is modified (cysteine methyl ester). Cys465 carries S-geranylgeranyl cysteine lipidation. Residues 466-468 (TLL) constitute a propeptide, removed in mature form.

It belongs to the aldehyde dehydrogenase family. Dually lipidated in the C-terminus; prenylation occurs prior to, and is a prerequisite for palmitoylation. It is also required for activity towards long-chain substrates.

The protein resides in the cell membrane. The enzyme catalyses an aldehyde + NAD(+) + H2O = a carboxylate + NADH + 2 H(+). The catalysed reaction is a long-chain fatty aldehyde + NAD(+) + H2O = a long-chain fatty acid + NADH + 2 H(+). It catalyses the reaction a medium-chain fatty aldehyde + NAD(+) + H2O = a medium-chain fatty acid + NADH + 2 H(+). It carries out the reaction octanal + NAD(+) + H2O = octanoate + NADH + 2 H(+). The enzyme catalyses nonanal + NAD(+) + H2O = nonanoate + NADH + 2 H(+). The catalysed reaction is hexadecanoate + NADH + 2 H(+) = hexadecanal + NAD(+) + H2O. It catalyses the reaction (2E)-octenal + NAD(+) + H2O = (2E)-octenoate + NADH + 2 H(+). It carries out the reaction (E)-non-2-enal + NAD(+) + H2O = (E)-non-2-enoate + NADH + 2 H(+). The enzyme catalyses (E)-4-hydroxynon-2-enal + NAD(+) + H2O = (E)-4-hydroxynon-2-enoate + NADH + 2 H(+). The catalysed reaction is (2E)-hexadecenal + NAD(+) + H2O = (E)-hexadec-2-enoate + NADH + 2 H(+). It catalyses the reaction benzaldehyde + NAD(+) + H2O = benzoate + NADH + 2 H(+). It carries out the reaction an aldehyde + NADP(+) + H2O = a carboxylate + NADPH + 2 H(+). The enzyme catalyses a medium-chain fatty aldehyde + NADP(+) + H2O = a medium-chain fatty acid + NADPH + 2 H(+). The catalysed reaction is hexanal + NADP(+) + H2O = hexanoate + NADPH + 2 H(+). It catalyses the reaction octanal + NADP(+) + H2O = octanoate + NADPH + 2 H(+). It carries out the reaction nonanal + NADP(+) + H2O = nonanoate + NADPH + 2 H(+). The enzyme catalyses (2E)-octenal + NADP(+) + H2O = (2E)-octenoate + NADPH + 2 H(+). The catalysed reaction is (E)-non-2-enal + NADP(+) + H2O = (E)-non-2-enoate + NADPH + 2 H(+). It catalyses the reaction (E)-4-hydroxynon-2-enal + NADP(+) + H2O = (E)-4-hydroxynon-2-enoate + NADPH + 2 H(+). It carries out the reaction benzaldehyde + NADP(+) + H2O = benzoate + NADPH + 2 H(+). It participates in alcohol metabolism; ethanol degradation; acetate from ethanol: step 2/2. In terms of biological role, oxidizes medium and long chain saturated and unsaturated fatty aldehydes generated in the plasma membrane into non-toxic fatty acids. May have a protective role against the cytotoxicity induced by lipid peroxidation. Short-chain fatty aldehydes are not good substrates. Can use both NADP(+) and NAD(+) as electron acceptor in vitro, however in vivo preference will depend on their tissue levels. Low activity towards acetaldehyde and 3,4-dihydroxyphenylacetaldehyde. Able to metabolize aromatic aldehydes such as benzaldehyde to their acid form. This is Aldehyde dehydrogenase family 3 member B1 (Aldh3b1) from Rattus norvegicus (Rat).